A 74-amino-acid chain; its full sequence is Beta-defensin 39 (74 aa).

An N-terminal signal peptide occupies residues 1 to 23; the sequence is MKISYFLLLILSLGSSQINPVSG. Disulfide bonds link C29–C58, C36–C51, and C41–C59.

It belongs to the beta-defensin family. Only expressed in epididymis (caput, corpus and cauda).

The protein resides in the secreted. Has antibacterial activity. The polypeptide is Beta-defensin 39 (Defb39) (Mus musculus (Mouse)).